A 380-amino-acid polypeptide reads, in one-letter code: Queuine tRNA-ribosyltransferase (380 aa).

Aspartate 95 serves as the catalytic Proton acceptor. Substrate is bound by residues 95 to 99 (DSGGF), aspartate 149, glutamine 192, and glycine 219. The interval 250-256 (GVGSPDS) is RNA binding. The active-site Nucleophile is aspartate 269. Positions 274-278 (TRIGR) are RNA binding; important for wobble base 34 recognition. 4 residues coordinate Zn(2+): cysteine 307, cysteine 309, cysteine 312, and histidine 338.

The protein belongs to the queuine tRNA-ribosyltransferase family. In terms of assembly, homodimer. Within each dimer, one monomer is responsible for RNA recognition and catalysis, while the other monomer binds to the replacement base PreQ1. Requires Zn(2+) as cofactor.

It catalyses the reaction 7-aminomethyl-7-carbaguanine + guanosine(34) in tRNA = 7-aminomethyl-7-carbaguanosine(34) in tRNA + guanine. It functions in the pathway tRNA modification; tRNA-queuosine biosynthesis. Catalyzes the base-exchange of a guanine (G) residue with the queuine precursor 7-aminomethyl-7-deazaguanine (PreQ1) at position 34 (anticodon wobble position) in tRNAs with GU(N) anticodons (tRNA-Asp, -Asn, -His and -Tyr). Catalysis occurs through a double-displacement mechanism. The nucleophile active site attacks the C1' of nucleotide 34 to detach the guanine base from the RNA, forming a covalent enzyme-RNA intermediate. The proton acceptor active site deprotonates the incoming PreQ1, allowing a nucleophilic attack on the C1' of the ribose to form the product. After dissociation, two additional enzymatic reactions on the tRNA convert PreQ1 to queuine (Q), resulting in the hypermodified nucleoside queuosine (7-(((4,5-cis-dihydroxy-2-cyclopenten-1-yl)amino)methyl)-7-deazaguanosine). The polypeptide is Queuine tRNA-ribosyltransferase (Geobacillus kaustophilus (strain HTA426)).